A 397-amino-acid polypeptide reads, in one-letter code: S-layer protein B (397 aa).

A signal peptide spans 1–24 (MVVKKTFVLSTLILISVVALVSTA). A coiled-coil region spans residues 259 to 314 (INALNNEVSTLRSEISSLNSTIASLNKSLANANTQISNLQSEITTLNSEIGKLNST). Residues 373-393 (GGIIAGIIGLIVAIVAIVLVM) form a helical membrane-spanning segment.

It belongs to the Sulfolobales SlaB family. In terms of assembly, the mushroom-shaped unit cells of the Sulfolobales' S-layers may consist of three SlaB subunits and six SlaA subunits.

The protein localises to the secreted. Its subcellular location is the cell wall. The protein resides in the S-layer. It localises to the cell membrane. Its function is as follows. S-layer small protein. May anchor the complex to the cell membrane. The sequence is that of S-layer protein B from Saccharolobus solfataricus (strain ATCC 35092 / DSM 1617 / JCM 11322 / P2) (Sulfolobus solfataricus).